The following is a 515-amino-acid chain: Zinc metalloproteinase-disintegrin-like EoMP06 (515 aa).

The propeptide occupies 1 to 94; that stretch reads VEDHCYYHGR…TLGLIVPPHG (94 aa). Gln95 carries the post-translational modification Pyrrolidone carboxylic acid. Residues 100-296 form the Peptidase M12B domain; it reads KFIELIIVVD…YNPKCIVDPP (197 aa). Glu103 contributes to the Ca(2+) binding site. Asn160 carries an N-linked (GlcNAc...) asparagine glycan. A Ca(2+)-binding site is contributed by Asp187. N-linked (GlcNAc...) asparagine glycosylation is found at Asn194 and Asn225. Intrachain disulfides connect Cys211–Cys291, Cys251–Cys275, and Cys253–Cys258. Residue His236 coordinates Zn(2+). The active site involves Glu237. Zn(2+)-binding residues include His240 and His246. Ca(2+) is bound by residues Cys291, Val306, Asn309, Val311, Glu313, Glu316, and Asp319. The region spanning 304–390 is the Disintegrin domain; that stretch reads PAVCGNGVWE…ECPRNEFQRN (87 aa). Intrachain disulfides connect Cys307-Cys336, Cys318-Cys331, Cys320-Cys326, Cys330-Cys353, Cys344-Cys350, Cys349-Cys375, Cys362-Cys382, Cys369-Cys401, Cys394-Cys406, Cys413-Cys466, Cys428-Cys477, Cys441-Cys454, Cys461-Cys503, and Cys497-Cys508. The short motif at 368–370 is the D/ECD-tripeptide element; the sequence is DCD. The Ca(2+) site is built by Asp370, Val371, and Asn385.

This sequence belongs to the venom metalloproteinase (M12B) family. P-III subfamily. P-IIIa sub-subfamily. As to quaternary structure, monomer. Zn(2+) is required as a cofactor. In terms of tissue distribution, expressed by the venom gland.

It is found in the secreted. Its function is as follows. Snake venom zinc metalloproteinase that catalyzes the conversion of prothrombin (F2) to alpha-thrombin through formation of a thrombin intermediate, thereby functioning as a procoagulant protein. The polypeptide is Zinc metalloproteinase-disintegrin-like EoMP06 (Echis ocellatus (Ocellated saw-scaled viper)).